A 153-amino-acid polypeptide reads, in one-letter code: 6,7-dimethyl-8-ribityllumazine synthase (153 aa).

5-amino-6-(D-ribitylamino)uracil contacts are provided by residues Phe-21, 55-57 (AFE), and 79-81 (TVI). 84 to 85 (AT) lines the (2S)-2-hydroxy-3-oxobutyl phosphate pocket. His-87 functions as the Proton donor in the catalytic mechanism. 5-amino-6-(D-ribitylamino)uracil is bound at residue Phe-112. Arg-126 contacts (2S)-2-hydroxy-3-oxobutyl phosphate.

This sequence belongs to the DMRL synthase family. In terms of assembly, forms an icosahedral capsid composed of 60 subunits, arranged as a dodecamer of pentamers.

It catalyses the reaction (2S)-2-hydroxy-3-oxobutyl phosphate + 5-amino-6-(D-ribitylamino)uracil = 6,7-dimethyl-8-(1-D-ribityl)lumazine + phosphate + 2 H2O + H(+). Its pathway is cofactor biosynthesis; riboflavin biosynthesis; riboflavin from 2-hydroxy-3-oxobutyl phosphate and 5-amino-6-(D-ribitylamino)uracil: step 1/2. In terms of biological role, catalyzes the formation of 6,7-dimethyl-8-ribityllumazine by condensation of 5-amino-6-(D-ribitylamino)uracil with 3,4-dihydroxy-2-butanone 4-phosphate. This is the penultimate step in the biosynthesis of riboflavin. This chain is 6,7-dimethyl-8-ribityllumazine synthase, found in Bacillus cereus (strain AH187).